A 287-amino-acid chain; its full sequence is Cyclopropane mycolic acid synthase 3 (287 aa).

S-adenosyl-L-methionine contacts are provided by residues 33 to 34 (YS), 68 to 76 (LLDIGCGWG), 94 to 99 (TLSENQ), and 123 to 124 (WE). Cysteine 269 is a catalytic residue.

This sequence belongs to the CFA/CMAS family. As to quaternary structure, homodimer.

The protein localises to the cytoplasm. The catalysed reaction is a 1-acyl-2-(9Z)-enoyl-sn-glycero-3-phospholipid + S-adenosyl-L-methionine = a 1-acyl-2-(9-cyclopronane)-acyl-sn-glycero-3-phospholipid + S-adenosyl-L-homocysteine + H(+). Its pathway is lipid metabolism; mycolic acid biosynthesis. Involved in the phagosome maturation block (PMB). Catalyzes the conversion of a double bond to a cyclopropane ring at the proximal position of an alpha mycolic acid via the transfer of a methylene group from S-adenosyl-L-methionine. It can use cis, cis 11,14-eicosadienoic acid and linoelaidic acid as substrate. Cyclopropanated mycolic acids are key factors participating in cell envelope permeability, host immunomodulation and persistence. The protein is Cyclopropane mycolic acid synthase 3 (pcaA) of Mycobacterium tuberculosis (strain CDC 1551 / Oshkosh).